A 453-amino-acid chain; its full sequence is Ribulose bisphosphate carboxylase large chain (453 aa).

Positions Met-1–Ser-2 are excised as a propeptide. Residue Pro-3 is modified to N-acetylproline. Residue Lys-14 is modified to N6,N6,N6-trimethyllysine. Substrate is bound by residues Asn-123 and Thr-173. Lys-175 functions as the Proton acceptor in the catalytic mechanism. Substrate is bound at residue Lys-177. The Mg(2+) site is built by Lys-201, Asp-203, and Glu-204. Lys-201 carries the N6-carboxylysine modification. The active-site Proton acceptor is His-294. The substrate site is built by Arg-295, His-327, and Ser-379.

This sequence belongs to the RuBisCO large chain family. Type I subfamily. In terms of assembly, heterohexadecamer of 8 large chains and 8 small chains; disulfide-linked. The disulfide link is formed within the large subunit homodimers. The cofactor is Mg(2+). Post-translationally, the disulfide bond which can form in the large chain dimeric partners within the hexadecamer appears to be associated with oxidative stress and protein turnover.

Its subcellular location is the plastid. The protein localises to the chloroplast. It catalyses the reaction 2 (2R)-3-phosphoglycerate + 2 H(+) = D-ribulose 1,5-bisphosphate + CO2 + H2O. The catalysed reaction is D-ribulose 1,5-bisphosphate + O2 = 2-phosphoglycolate + (2R)-3-phosphoglycerate + 2 H(+). RuBisCO catalyzes two reactions: the carboxylation of D-ribulose 1,5-bisphosphate, the primary event in carbon dioxide fixation, as well as the oxidative fragmentation of the pentose substrate in the photorespiration process. Both reactions occur simultaneously and in competition at the same active site. This is Ribulose bisphosphate carboxylase large chain from Cruciata glabra (Slender crosswort).